Consider the following 176-residue polypeptide: RNA 2',3'-cyclic phosphodiesterase (176 aa).

The active-site Proton donor is the His-39. 2 consecutive short sequence motifs (HXTX) follow at residues 39 to 42 and 122 to 125; these read HITL and HLTV. The Proton acceptor role is filled by His-122.

Belongs to the 2H phosphoesterase superfamily. ThpR family.

It carries out the reaction a 3'-end 2',3'-cyclophospho-ribonucleotide-RNA + H2O = a 3'-end 2'-phospho-ribonucleotide-RNA + H(+). Its function is as follows. Hydrolyzes RNA 2',3'-cyclic phosphodiester to an RNA 2'-phosphomonoester. The protein is RNA 2',3'-cyclic phosphodiesterase of Archaeoglobus fulgidus (strain ATCC 49558 / DSM 4304 / JCM 9628 / NBRC 100126 / VC-16).